An 804-amino-acid polypeptide reads, in one-letter code: Phenylalanine--tRNA ligase beta subunit (804 aa).

Positions 38 to 148 (RAAFRAFTIA…ENAPVGTSFA (111 aa)) constitute a tRNA-binding domain. One can recognise a B5 domain in the interval 401–476 (HTARVIDFPV…RIHGINRIDP (76 aa)). Mg(2+)-binding residues include Asp454, Asp460, Glu463, and Glu464. One can recognise an FDX-ACB domain in the interval 710–803 (SLFQSLKRDY…VAKQTGGVLR (94 aa)).

The protein belongs to the phenylalanyl-tRNA synthetase beta subunit family. Type 1 subfamily. As to quaternary structure, tetramer of two alpha and two beta subunits. The cofactor is Mg(2+).

It localises to the cytoplasm. The catalysed reaction is tRNA(Phe) + L-phenylalanine + ATP = L-phenylalanyl-tRNA(Phe) + AMP + diphosphate + H(+). In Brucella abortus (strain 2308), this protein is Phenylalanine--tRNA ligase beta subunit.